The following is a 661-amino-acid chain: Kininogen-1 (661 aa).

Residues 1–20 (MKLITTLLLCSGLLLTLTQG) form the signal peptide. A Cystatin kininogen-type 1 domain is found at 28–131 (CNDEAVFQAV…TQTCKIAPSK (104 aa)). Cystine bridges form between Cys28-Cys631, Cys83-Cys94, Cys107-Cys125, Cys141-Cys144, Cys205-Cys217, Cys228-Cys247, Cys263-Cys266, Cys327-Cys339, and Cys350-Cys369. Asn82 carries an N-linked (GlcNAc...) asparagine glycan. Residues 150–253 (TDSPDLEPVL…SQSCTLYSGD (104 aa)) form the Cystatin kininogen-type 2 domain. Asn168 and Asn204 each carry an N-linked (GlcNAc...) asparagine glycan. Asn242 is a glycosylation site (N-linked (GlcNAc...) asparagine). A Cystatin kininogen-type 3 domain is found at 272 to 375 (VDSPELKEVL…TVKCQALDMT (104 aa)). Ser331 bears the Phosphoserine mark. 3 disordered regions span residues 405 to 471 (YIAR…LGHG), 485 to 583 (DGDD…FQDS), and 626 to 661 (ATSPKCPGRPWKPASWEDPNTETTEFSDFDLLDALS). 2 stretches are compositionally biased toward basic residues: residues 434–471 (KANKNHRGHKHGHDHGHWSPRRHGLGHGHQKPHGLGHG) and 492–526 (TVGHGHGHGHGHGHGHGHGHGHGHGHGHGHGHGKH). Residues 541–555 (TESLASSSEYSTTST) show a composition bias toward low complexity. The span at 650–661 (EFSDFDLLDALS) shows a compositional bias: acidic residues.

As to quaternary structure, isoform LMW interacts with CRISP3. Post-translationally, bradykinin is released from kininogen by plasma kallikrein. In terms of processing, phosphorylated by FAM20C in the extracellular medium. Bradykinin is inactivated by ACE, which removes the dipeptide Arg-Phe from its C-terminus. As to expression, plasma.

Its subcellular location is the secreted. The protein resides in the extracellular space. Kininogens are inhibitors of thiol proteases. HMW-kininogen plays an important role in blood coagulation by helping to position optimally prekallikrein and factor XI next to factor XII; HMW-kininogen inhibits the thrombin- and plasmin-induced aggregation of thrombocytes. LMW-kininogen inhibits the aggregation of thrombocytes. LMW-kininogen is in contrast to HMW-kininogen not involved in blood clotting. In terms of biological role, the active peptide bradykinin is a potent vasodilatator that is released from HMW-kininogen shows a variety of physiological effects: (A) influence in smooth muscle contraction, (B) induction of hypotension, (C) natriuresis and diuresis, (D) decrease in blood glucose level, (E) it is a mediator of inflammation and causes (E1) increase in vascular permeability, (E2) stimulation of nociceptors (4E3) release of other mediators of inflammation (e.g. prostaglandins), (F) it has a cardioprotective effect (directly via bradykinin action, indirectly via endothelium-derived relaxing factor action). This chain is Kininogen-1 (Kng1), found in Mus musculus (Mouse).